Here is a 414-residue protein sequence, read N- to C-terminus: 2,3-diketo-5-methylthiopentyl-1-phosphate enolase (414 aa).

Lys99 functions as the Proton acceptor in the catalytic mechanism. Residues Lys148, 174–177 (KDDE), His265, Gly338, and 360–361 (GG) each bind substrate. The Mg(2+) site is built by Lys174, Asp176, and Glu177. Lys174 is subject to N6-carboxylysine.

The protein belongs to the RuBisCO large chain family. Type IV subfamily. As to quaternary structure, homodimer. Requires Mg(2+) as cofactor.

It catalyses the reaction 5-methylsulfanyl-2,3-dioxopentyl phosphate = 2-hydroxy-5-methylsulfanyl-3-oxopent-1-enyl phosphate. It participates in amino-acid biosynthesis; L-methionine biosynthesis via salvage pathway; L-methionine from S-methyl-5-thio-alpha-D-ribose 1-phosphate: step 3/6. Its function is as follows. Catalyzes the enolization of 2,3-diketo-5-methylthiopentyl-1-phosphate (DK-MTP-1-P) into 2-hydroxy-3-keto-5-methylthiopentenyl-1-phosphate (HK-MTPenyl-1-P). This Bacillus cereus (strain ATCC 14579 / DSM 31 / CCUG 7414 / JCM 2152 / NBRC 15305 / NCIMB 9373 / NCTC 2599 / NRRL B-3711) protein is 2,3-diketo-5-methylthiopentyl-1-phosphate enolase.